The following is a 216-amino-acid chain: ATP synthase subunit a (216 aa).

The next 7 helical transmembrane spans lie at Met1–Leu21, Leu62–Phe82, Asn88–Phe108, Phe119–Ile139, Leu149–Lys169, Leu174–Ile194, and Thr196–His216.

The protein belongs to the ATPase A chain family. As to quaternary structure, F-type ATPases have 2 components, CF(1) - the catalytic core - and CF(0) - the membrane proton channel. CF(1) has five subunits: alpha(3), beta(3), gamma(1), delta(1), epsilon(1). CF(0) has three main subunits: a(1), b(2) and c(9-12). The alpha and beta chains form an alternating ring which encloses part of the gamma chain. CF(1) is attached to CF(0) by a central stalk formed by the gamma and epsilon chains, while a peripheral stalk is formed by the delta and b chains.

It is found in the cell inner membrane. Its function is as follows. Key component of the proton channel; it plays a direct role in the translocation of protons across the membrane. The sequence is that of ATP synthase subunit a from Aquifex aeolicus (strain VF5).